Here is a 457-residue protein sequence, read N- to C-terminus: MPLSLPLHIVILAAGEGKRMKSALPKVLHPIAGKPMLAHVITAAQALTPDAIHVVYGHAGNQVRAAFADQTDLHWVEQAQQLGTGHAVKQTMSAIPNAANVLVLYGDVPLIRAETLKRLPRASTPIAVLVTELANPAGYGHIVRNSEGKVAAIIEDKDADEEQRRIHTVNTGILCAESTALRRWLSKLSNTNMQGEYYLTDIFASATADLTPANMIMVTDAREVEGVNDLWQLTQLERAWQIRAARALCLQGARVADPARLDQRGTIRIGQNVHIDIDVVLEGEIELGDNVVIGPFVRLKNVKLGPGTKVHAHCDLEGVTTTGSALIGPFARLRPGTMLADGVHIGNFVETKNTSIGADSKANHLTYLGDAQIGTKVNIGAGTITCNYDGINKSITLIGDGAFIGSHSALIAPVSVGAGATLGAGTVLTHDAPAHQLTVARSRQTTLDSWQRPKKKT.

The tract at residues M1–L230 is pyrophosphorylase. UDP-N-acetyl-alpha-D-glucosamine is bound by residues L12–G15, K26, Q78, G83–T84, Y105–D107, G140, E155, N170, and N228. D107 provides a ligand contact to Mg(2+). Residue N228 coordinates Mg(2+). Positions W231–Q251 are linker. The segment at G252–T457 is N-acetyltransferase. UDP-N-acetyl-alpha-D-glucosamine contacts are provided by R334 and K352. H364 serves as the catalytic Proton acceptor. Residues Y367 and N378 each coordinate UDP-N-acetyl-alpha-D-glucosamine. Acetyl-CoA-binding positions include A381, N387–Y388, S406, A424, and R441.

In the N-terminal section; belongs to the N-acetylglucosamine-1-phosphate uridyltransferase family. The protein in the C-terminal section; belongs to the transferase hexapeptide repeat family. Homotrimer. Mg(2+) serves as cofactor.

The protein resides in the cytoplasm. It carries out the reaction alpha-D-glucosamine 1-phosphate + acetyl-CoA = N-acetyl-alpha-D-glucosamine 1-phosphate + CoA + H(+). The catalysed reaction is N-acetyl-alpha-D-glucosamine 1-phosphate + UTP + H(+) = UDP-N-acetyl-alpha-D-glucosamine + diphosphate. It participates in nucleotide-sugar biosynthesis; UDP-N-acetyl-alpha-D-glucosamine biosynthesis; N-acetyl-alpha-D-glucosamine 1-phosphate from alpha-D-glucosamine 6-phosphate (route II): step 2/2. The protein operates within nucleotide-sugar biosynthesis; UDP-N-acetyl-alpha-D-glucosamine biosynthesis; UDP-N-acetyl-alpha-D-glucosamine from N-acetyl-alpha-D-glucosamine 1-phosphate: step 1/1. Its pathway is bacterial outer membrane biogenesis; LPS lipid A biosynthesis. In terms of biological role, catalyzes the last two sequential reactions in the de novo biosynthetic pathway for UDP-N-acetylglucosamine (UDP-GlcNAc). The C-terminal domain catalyzes the transfer of acetyl group from acetyl coenzyme A to glucosamine-1-phosphate (GlcN-1-P) to produce N-acetylglucosamine-1-phosphate (GlcNAc-1-P), which is converted into UDP-GlcNAc by the transfer of uridine 5-monophosphate (from uridine 5-triphosphate), a reaction catalyzed by the N-terminal domain. This chain is Bifunctional protein GlmU, found in Xylella fastidiosa (strain 9a5c).